Reading from the N-terminus, the 431-residue chain is Enolase (431 aa).

A (2R)-2-phosphoglycerate-binding site is contributed by Gln167. Catalysis depends on Glu209, which acts as the Proton donor. Asp246, Glu289, and Asp316 together coordinate Mg(2+). (2R)-2-phosphoglycerate contacts are provided by Lys341, Arg370, Ser371, and Lys392. The active-site Proton acceptor is the Lys341.

Belongs to the enolase family. Component of the RNA degradosome, a multiprotein complex involved in RNA processing and mRNA degradation. It depends on Mg(2+) as a cofactor.

The protein resides in the cytoplasm. It localises to the secreted. It is found in the cell surface. The enzyme catalyses (2R)-2-phosphoglycerate = phosphoenolpyruvate + H2O. It participates in carbohydrate degradation; glycolysis; pyruvate from D-glyceraldehyde 3-phosphate: step 4/5. Catalyzes the reversible conversion of 2-phosphoglycerate (2-PG) into phosphoenolpyruvate (PEP). It is essential for the degradation of carbohydrates via glycolysis. In Shewanella sediminis (strain HAW-EB3), this protein is Enolase.